The following is a 206-amino-acid chain: MIAKLTGLLDSTGLDWAIVDVGGVGYLVSASARTLRRLAAPGEAVSLLTEMWVSEDNIQLFGFADTEERDWFRLLTTVQGVGARVALNLLSALSPAELTNSIAAQDRTALCQADGVGPKLAARILNELKEKVASFGAPAPAAATAGKGGAAPAGPAGAVADAVSALVNLGYRRVEAFTAVNAVAQRLGPEAGVSDLIRAGLKELSP.

A domain I region spans residues Met-1–Ala-64. The tract at residues Asp-65–Ala-143 is domain II. The tract at residues Thr-144–Gly-154 is flexible linker. The domain III stretch occupies residues Gly-154–Pro-206.

It belongs to the RuvA family. As to quaternary structure, homotetramer. Forms an RuvA(8)-RuvB(12)-Holliday junction (HJ) complex. HJ DNA is sandwiched between 2 RuvA tetramers; dsDNA enters through RuvA and exits via RuvB. An RuvB hexamer assembles on each DNA strand where it exits the tetramer. Each RuvB hexamer is contacted by two RuvA subunits (via domain III) on 2 adjacent RuvB subunits; this complex drives branch migration. In the full resolvosome a probable DNA-RuvA(4)-RuvB(12)-RuvC(2) complex forms which resolves the HJ.

The protein localises to the cytoplasm. Its function is as follows. The RuvA-RuvB-RuvC complex processes Holliday junction (HJ) DNA during genetic recombination and DNA repair, while the RuvA-RuvB complex plays an important role in the rescue of blocked DNA replication forks via replication fork reversal (RFR). RuvA specifically binds to HJ cruciform DNA, conferring on it an open structure. The RuvB hexamer acts as an ATP-dependent pump, pulling dsDNA into and through the RuvAB complex. HJ branch migration allows RuvC to scan DNA until it finds its consensus sequence, where it cleaves and resolves the cruciform DNA. The protein is Holliday junction branch migration complex subunit RuvA of Rhodospirillum centenum (strain ATCC 51521 / SW).